The following is a 345-amino-acid chain: Skn-1 dependent zygotic transcript 15 protein (345 aa).

The region spanning 11–55 is the F-box domain; sequence AFGLHKLPHLVSDKVVKSMVPMELFTYSMVAEETKALVKRLFKKV.

Functionally, may have a role in embryogenesis. The chain is Skn-1 dependent zygotic transcript 15 protein (sdz-15) from Caenorhabditis elegans.